The chain runs to 340 residues: Putative phosphatidylcholine:ceramide cholinephosphotransferase 3 (340 aa).

Positions 1–25 (MGSVSKTVISARGASPDDEQNGTKN) are disordered. A run of 4 helical transmembrane segments spans residues 36-56 (CIFL…VLAY), 81-101 (SSLG…LLVI), 178-198 (LLFS…AYYL), and 202-222 (IKPL…CMTI). The active site involves H183. Residues 223–340 (SRTHYTIDVV…SSSSTYPLPC (118 aa)) lie on the Cytoplasmic side of the membrane. Residues H226 and D230 contribute to the active site. The interval 294 to 313 (STPRGQERGGASAESSDSSV) is disordered.

Belongs to the sphingomyelin synthase family.

Its subcellular location is the membrane. It carries out the reaction an N-acyl-sphingoid base + a 1,2-diacyl-sn-glycero-3-phosphocholine = an N-(acyl)-sphingosylphosphocholine + a 1,2-diacyl-sn-glycerol. It catalyses the reaction an N-acylsphing-4-enine + a 1,2-diacyl-sn-glycero-3-phosphocholine = a sphingomyelin + a 1,2-diacyl-sn-glycerol. The enzyme catalyses an N-acyl-15-methylhexadecasphing-4-enine + a 1,2-diacyl-sn-glycero-3-phosphocholine = an N-acyl-15-methylhexadecasphing-4-enine-1-phosphocholine + a 1,2-diacyl-sn-glycerol. It participates in lipid metabolism; sphingolipid metabolism. Functionally, bidirectional lipid cholinephosphotransferase capable of converting phosphatidylcholine (PC) and ceramide to sphingomyelin (SM) and diacylglycerol (DAG) and vice versa. Direction is dependent on the relative concentrations of DAG and ceramide as phosphocholine acceptors. Directly and specifically recognizes the choline head group on the substrate. Also requires two fatty chains on the choline-P donor molecule in order to be recognized efficiently as a substrate. Does not function strictly as a SM synthase. C.elegans contains specific sphingoid bases, which are unique or different in structure compared to the sphingoid bases found in other animals. Two examples of these distinctive compounds are: 15-methylhexadecasphinganine and 15-methylhexadecasphing-4-enine. The polypeptide is Putative phosphatidylcholine:ceramide cholinephosphotransferase 3 (sms-3) (Caenorhabditis elegans).